Reading from the N-terminus, the 446-residue chain is NADP-specific glutamate dehydrogenase (446 aa).

Substrate-binding residues include Lys-92, Gln-113, and Lys-116. Lys-128 (proton donor) is an active-site residue. Position 167 (Gly-167) interacts with substrate. NADP(+) contacts are provided by Thr-211 and Asn-242. Ser-379 lines the substrate pocket.

It belongs to the Glu/Leu/Phe/Val dehydrogenases family. Homohexamer.

It carries out the reaction L-glutamate + NADP(+) + H2O = 2-oxoglutarate + NH4(+) + NADPH + H(+). Catalyzes the reversible oxidative deamination of glutamate to a-ketoglutarate and ammonia. This chain is NADP-specific glutamate dehydrogenase (gdhA), found in Unknown prokaryotic organism.